Consider the following 308-residue polypeptide: Homeobox-leucine zipper protein HOX2 (308 aa).

Disordered stretches follow at residues 15–36 (QGSL…SSPW) and 71–117 (QGRA…RKKL). Residues 74-88 (ASTSPDSAAALSSAS) are compositionally biased toward low complexity. Positions 112–171 (GGRKKLRLSKDQAAVLEECFKTHSTLNPKQKVALANRLGLRPRQVEVWFQNRRARTKLKQ) form a DNA-binding region, homeobox. The interval 170-214 (KQTEVDCEYLKRWCERLADENKRLEKELADLRALKAAPSPASASA) is leucine-zipper.

Belongs to the HD-ZIP homeobox family. Class II subfamily. As to quaternary structure, homodimer. May form a heterodimer with HOX1, HOX3 or HOX7. Expressed in seedlings, roots, leaves, nodes, internodes, flowers and embryo.

It localises to the nucleus. In terms of biological role, probable transcription factor that binds to the DNA sequence 5'-CAAT[GC]ATTG-3'. This Oryza sativa subsp. indica (Rice) protein is Homeobox-leucine zipper protein HOX2 (HOX2).